The chain runs to 543 residues: Carboxypeptidase Y homolog A (543 aa).

Positions 1-17 (MKLLTTGLLASAALVAA) are cleaved as a signal peptide. Positions 18–124 (QEQQVLRADE…KLKNYDLRVK (107 aa)) are excised as a propeptide. Intrachain disulfides connect Cys-179/Cys-419, Cys-313/Cys-327, Cys-337/Cys-360, Cys-344/Cys-353, and Cys-382/Cys-389. The N-linked (GlcNAc...) asparagine glycan is linked to Asn-210. Ser-266 is a catalytic residue. Asp-458 is an active-site residue. N-linked (GlcNAc...) asparagine glycosylation occurs at Asn-509. The active site involves His-520.

Belongs to the peptidase S10 family.

The protein resides in the vacuole. The catalysed reaction is Release of a C-terminal amino acid with broad specificity.. Its function is as follows. Vacuolar carboxypeptidase involved in degradation of small peptides. Digests preferentially peptides containing an aliphatic or hydrophobic residue in P1' position, as well as methionine, leucine or phenylalanine in P1 position of ester substrate. This is Carboxypeptidase Y homolog A (CPYA) from Arthroderma gypseum (strain ATCC MYA-4604 / CBS 118893) (Microsporum gypseum).